A 192-amino-acid polypeptide reads, in one-letter code: Peptidyl-tRNA hydrolase (192 aa).

Residue Tyr17 coordinates tRNA. The active-site Proton acceptor is the His22. TRNA contacts are provided by Tyr68, Asn70, and Asn116.

This sequence belongs to the PTH family. In terms of assembly, monomer.

It localises to the cytoplasm. The enzyme catalyses an N-acyl-L-alpha-aminoacyl-tRNA + H2O = an N-acyl-L-amino acid + a tRNA + H(+). Functionally, hydrolyzes ribosome-free peptidyl-tRNAs (with 1 or more amino acids incorporated), which drop off the ribosome during protein synthesis, or as a result of ribosome stalling. Catalyzes the release of premature peptidyl moieties from peptidyl-tRNA molecules trapped in stalled 50S ribosomal subunits, and thus maintains levels of free tRNAs and 50S ribosomes. The polypeptide is Peptidyl-tRNA hydrolase (Mycolicibacterium vanbaalenii (strain DSM 7251 / JCM 13017 / BCRC 16820 / KCTC 9966 / NRRL B-24157 / PYR-1) (Mycobacterium vanbaalenii)).